A 195-amino-acid polypeptide reads, in one-letter code: Ras-related protein Rab-31 (195 aa).

The GTP site is built by Gly16, Gly18, Lys19, Ser20, Ser21, Asp32, and His33. Ser20 provides a ligand contact to Mg(2+). Short sequence motifs (switch) lie at residues 30–42 (HFDH…IGAS) and 63–79 (AGQE…YRGS). Phosphoserine is present on Ser36. Residues Thr38, Gly64, Asn119, Asp122, Ala150, and Lys151 each coordinate GTP. Thr38 provides a ligand contact to Mg(2+). Residues Cys194 and Cys195 are each lipidated (S-geranylgeranyl cysteine).

This sequence belongs to the small GTPase superfamily. Rab family. As to quaternary structure, interacts (in GDP-bound form) with RIN3 and GAPVD1, which function as guanine exchange factors (GEF). Interacts (in GTP-bound form) with EEA1. Interacts with NGFR. Interacts with EGFR. Interacts with OCRL. Interacts (in GTP-bound form) with APPL2; interaction contributes to or enhances recruitment of APPL2 to the phagosomes; interaction enhances Fc-gamma receptor-mediated phagocytosis through PI3K/Akt signaling in macrophages. Mg(2+) serves as cofactor. As to expression, detected in brain astrocytes, spleen and intestine (at protein level).

Its subcellular location is the early endosome. The protein localises to the golgi apparatus. The protein resides in the trans-Golgi network. It is found in the trans-Golgi network membrane. It localises to the cytoplasmic vesicle. Its subcellular location is the phagosome. The protein localises to the phagosome membrane. It carries out the reaction GTP + H2O = GDP + phosphate + H(+). Regulated by guanine nucleotide exchange factors (GEFs) including RIN3 and GAPVD1 which promote the exchange of bound GDP for free GTP. Regulated by GTPase activating proteins (GAPs) which increase the GTP hydrolysis activity. Inhibited by GDP dissociation inhibitors (GDIs) which prevent Rab-GDP dissociation. Functionally, the small GTPases Rab are key regulators of intracellular membrane trafficking, from the formation of transport vesicles to their fusion with membranes. Rabs cycle between an inactive GDP-bound form and an active GTP-bound form that is able to recruit to membranes different set of downstream effectors directly responsible for vesicle formation, movement, tethering and fusion. Required for the integrity and for normal function of the Golgi apparatus and the trans-Golgi network. Plays a role in insulin-stimulated translocation of GLUT4 to the cell membrane. Plays a role in the maturation of phagosomes that engulf pathogens, such as S.aureus and Mycobacterium. Plays a role in M6PR transport from the trans-Golgi network to endosomes. Plays a role in the internalization of EGFR from the cell membrane into endosomes. This chain is Ras-related protein Rab-31, found in Rattus norvegicus (Rat).